We begin with the raw amino-acid sequence, 274 residues long: Large ribosomal subunit protein uL2cz/uL2cy (274 aa).

Disordered regions lie at residues methionine 1–asparagine 25 and asparagine 224–lysine 274.

The protein belongs to the universal ribosomal protein uL2 family. In terms of assembly, part of the 50S ribosomal subunit.

It localises to the plastid. The protein localises to the chloroplast. The sequence is that of Large ribosomal subunit protein uL2cz/uL2cy (rpl2-A) from Aethionema cordifolium (Lebanon stonecress).